The sequence spans 420 residues: Tryptophan--tRNA ligase (420 aa).

The short motif at 72-80 (PSGLPHFGH) is the 'HIGH' region element. The 'KMSKS' region motif lies at 308-312 (KMSSS).

It belongs to the class-I aminoacyl-tRNA synthetase family.

It is found in the cytoplasm. It catalyses the reaction tRNA(Trp) + L-tryptophan + ATP = L-tryptophyl-tRNA(Trp) + AMP + diphosphate + H(+). The protein is Tryptophan--tRNA ligase of Archaeoglobus fulgidus (strain ATCC 49558 / DSM 4304 / JCM 9628 / NBRC 100126 / VC-16).